A 161-amino-acid polypeptide reads, in one-letter code: Regulator of ribonuclease activity A (161 aa).

Belongs to the RraA family. As to quaternary structure, homotrimer. Binds to both RNA-binding sites in the C-terminal region of Rne and to RhlB.

It is found in the cytoplasm. In terms of biological role, globally modulates RNA abundance by binding to RNase E (Rne) and regulating its endonucleolytic activity. Can modulate Rne action in a substrate-dependent manner by altering the composition of the degradosome. Modulates RNA-binding and helicase activities of the degradosome. The sequence is that of Regulator of ribonuclease activity A from Pseudoalteromonas atlantica (strain T6c / ATCC BAA-1087).